The primary structure comprises 179 residues: UPF0227 protein VC0395_A1482/VC395_2007 (179 aa).

It belongs to the UPF0227 family.

The protein is UPF0227 protein VC0395_A1482/VC395_2007 of Vibrio cholerae serotype O1 (strain ATCC 39541 / Classical Ogawa 395 / O395).